The following is a 30-amino-acid chain: Cyclotide vdif-A (30 aa).

A cross-link (cyclopeptide (Gly-Asn)) is located at residues 1–30 (GIPCGESCVFIPCISSVVGCSCKSKVCYRN). 3 cysteine pairs are disulfide-bonded: C4-C20, C8-C22, and C13-C27.

It belongs to the cyclotide family. Bracelet subfamily. Post-translationally, this is a cyclic peptide.

Its function is as follows. Probably participates in a plant defense mechanism. This Viola diffusa protein is Cyclotide vdif-A.